Consider the following 324-residue polypeptide: Probable pectinesterase A (324 aa).

Residues 1–19 (MHGSLLKLALLSFSLASSA) form the signal peptide. Position 142 (Q142) interacts with substrate. The active-site Proton donor is D165. D186 serves as the catalytic Nucleophile. Residues R246 and W248 each coordinate substrate. N285 carries an N-linked (GlcNAc...) asparagine glycan.

It belongs to the pectinesterase family.

It localises to the secreted. It catalyses the reaction [(1-&gt;4)-alpha-D-galacturonosyl methyl ester](n) + n H2O = [(1-&gt;4)-alpha-D-galacturonosyl](n) + n methanol + n H(+). The protein operates within glycan metabolism; pectin degradation; 2-dehydro-3-deoxy-D-gluconate from pectin: step 1/5. Functionally, involved in maceration and soft-rotting of plant tissue. The polypeptide is Probable pectinesterase A (pmeA) (Aspergillus flavus (strain ATCC 200026 / FGSC A1120 / IAM 13836 / NRRL 3357 / JCM 12722 / SRRC 167)).